Reading from the N-terminus, the 509-residue chain is MNQLQAEINAANAVFPVSDSTKIPKVSQKLFGLLGDGFFPQLHPKGLKIADNIAALFDQYNLKSIALKNFDLNLERKNDIVIQGKVCYSFSIKMDFATIYEGDGSTIDLQFALNASTTNFANLTDLQDSFWQSGKDLNTQLFWKPSVHKLISNGTNDLTTLAQTALGDSLFDTKVNLTESVIEINNQTDVATKFREKVLNSFKQEREKAHAEHVEKLRKLEEERKLQEAEAKAKAEEVKKLEAEREAFNKSLTAASEFKQYWSKKNKDVTDKKQLAEALKISLEADRNRTFSFLIAGFRTAIDWYYNAKKENNDAKQKAFGSQGIQFPKDGLNGIYMPDWLRGELTSKSNINLKIKELKVQNKIESPTINWIDGVGIKQDKANPFNYRFEVDIKYTGGYQLYGFYAFAALFTKFPSSWSGEMNLKFIVDGSIPVYTVAKKDYPGSLFQFNDKDELLFTLYVKEQISVADPNFMNLLRGQNLHDLELVTGATKPPVVDLASYLHFVLLSA.

Belongs to the MG032/MG096/MG288 family.

This is an uncharacterized protein from Mycoplasma pneumoniae (strain ATCC 29342 / M129 / Subtype 1) (Mycoplasmoides pneumoniae).